A 124-amino-acid chain; its full sequence is Small ribosomal subunit protein uS12 (124 aa).

Aspartate 89 carries the 3-methylthioaspartic acid modification.

Belongs to the universal ribosomal protein uS12 family. As to quaternary structure, part of the 30S ribosomal subunit. Contacts proteins S8 and S17. May interact with IF1 in the 30S initiation complex.

Functionally, with S4 and S5 plays an important role in translational accuracy. In terms of biological role, interacts with and stabilizes bases of the 16S rRNA that are involved in tRNA selection in the A site and with the mRNA backbone. Located at the interface of the 30S and 50S subunits, it traverses the body of the 30S subunit contacting proteins on the other side and probably holding the rRNA structure together. The combined cluster of proteins S8, S12 and S17 appears to hold together the shoulder and platform of the 30S subunit. In Aliivibrio fischeri (strain ATCC 700601 / ES114) (Vibrio fischeri), this protein is Small ribosomal subunit protein uS12.